Consider the following 70-residue polypeptide: DNA gyrase inhibitor YacG (70 aa).

Zn(2+)-binding residues include C21, C24, C36, and C40.

This sequence belongs to the DNA gyrase inhibitor YacG family. As to quaternary structure, interacts with GyrB. Zn(2+) is required as a cofactor.

Its function is as follows. Inhibits all the catalytic activities of DNA gyrase by preventing its interaction with DNA. Acts by binding directly to the C-terminal domain of GyrB, which probably disrupts DNA binding by the gyrase. The polypeptide is DNA gyrase inhibitor YacG (Rhizobium meliloti (strain 1021) (Ensifer meliloti)).